We begin with the raw amino-acid sequence, 61 residues long: Protein transport protein Sec61 subunit beta (61 aa).

Topologically, residues 1-35 are cytoplasmic; sequence MKRPSTQRAPATVNKGGNSMMKFYSEDAIGLKVGP. The helical transmembrane segment at 36–56 threads the bilayer; the sequence is TAVLFMSLIFIAFVIILHIMG. Residues 57–61 lie on the Extracellular side of the membrane; the sequence is KYTRS.

This sequence belongs to the SEC61-beta family. As to quaternary structure, the SEC61 channel-forming translocon complex.

The protein resides in the endoplasmic reticulum membrane. Functionally, component of SEC61 channel-forming translocon complex that mediates transport of signal peptide-containing precursor polypeptides across the endoplasmic reticulum (ER). Forms a ribosome receptor and a gated pore in the ER membrane, both functions required for cotranslational translocation of nascent polypeptides. The polypeptide is Protein transport protein Sec61 subunit beta (sec61b) (Dictyostelium discoideum (Social amoeba)).